Here is a 134-residue protein sequence, read N- to C-terminus: D-ribose pyranase (134 aa).

Histidine 20 acts as the Proton donor in catalysis. Substrate contacts are provided by residues aspartate 28, histidine 101, and 123–125 (YSN).

The protein belongs to the RbsD / FucU family. RbsD subfamily. In terms of assembly, homodecamer.

It localises to the cytoplasm. It carries out the reaction beta-D-ribopyranose = beta-D-ribofuranose. It functions in the pathway carbohydrate metabolism; D-ribose degradation; D-ribose 5-phosphate from beta-D-ribopyranose: step 1/2. Its function is as follows. Catalyzes the interconversion of beta-pyran and beta-furan forms of D-ribose. The protein is D-ribose pyranase of Pseudomonas syringae pv. syringae (strain B728a).